The chain runs to 116 residues: Protein alpha-2 (116 aa).

This chain is Protein alpha-2 (alpha), found in Bos taurus (Bovine).